The primary structure comprises 397 residues: t-SNARE affecting a late Golgi compartment protein 2 (397 aa).

At 1 to 317 the chain is on the cytoplasmic side; the sequence is MFRDRTNLFL…HYQKRTQKCK (317 aa). A coiled-coil region spans residues 74–96; it reads DIAQDVDDYLLEVRRLSEQLAKV. Residue Ser109 is modified to Phosphoserine. The 63-residue stretch at 244-306 folds into the t-SNARE coiled-coil homology domain; that stretch reads EAYLRERDEE…KSADKELNKA (63 aa). Residues 318 to 338 traverse the membrane as a helical; Anchor for type IV membrane protein segment; it reads VILLLTLCVIALFFFVMLKPH. Residues 339-397 are Vesicular-facing; it reads GGGSGGRNNGSNKYNNDDNKTVNNSHDDGSNTHINDEESNLPSIVEVTESENDALDDLL. A disordered region spans residues 341–397; sequence GSGGRNNGSNKYNNDDNKTVNNSHDDGSNTHINDEESNLPSIVEVTESENDALDDLL. Residues 353–374 show a composition bias toward basic and acidic residues; that stretch reads NNDDNKTVNNSHDDGSNTHIND. Positions 386 to 397 are enriched in acidic residues; that stretch reads TESENDALDDLL.

This sequence belongs to the syntaxin family. Interacts with VPS45.

It localises to the golgi apparatus. It is found in the trans-Golgi network membrane. Its subcellular location is the endosome membrane. In terms of biological role, t-SNARE that functions in transport from the endosome to the late Golgi and on the endocytic pathway. The protein is t-SNARE affecting a late Golgi compartment protein 2 (TLG2) of Saccharomyces cerevisiae (strain ATCC 204508 / S288c) (Baker's yeast).